A 308-amino-acid polypeptide reads, in one-letter code: Ribosomal RNA small subunit methyltransferase H (308 aa).

S-adenosyl-L-methionine is bound by residues 36-38, Asp55, Phe86, Asp103, and Gln110; that span reads GGH.

It belongs to the methyltransferase superfamily. RsmH family.

It is found in the cytoplasm. It catalyses the reaction cytidine(1402) in 16S rRNA + S-adenosyl-L-methionine = N(4)-methylcytidine(1402) in 16S rRNA + S-adenosyl-L-homocysteine + H(+). Functionally, specifically methylates the N4 position of cytidine in position 1402 (C1402) of 16S rRNA. The polypeptide is Ribosomal RNA small subunit methyltransferase H (Helicobacter pylori (strain HPAG1)).